We begin with the raw amino-acid sequence, 156 residues long: Small ribosomal subunit protein uS7 (156 aa).

This sequence belongs to the universal ribosomal protein uS7 family. As to quaternary structure, part of the 30S ribosomal subunit. Contacts proteins S9 and S11.

Its function is as follows. One of the primary rRNA binding proteins, it binds directly to 16S rRNA where it nucleates assembly of the head domain of the 30S subunit. Is located at the subunit interface close to the decoding center, probably blocks exit of the E-site tRNA. This is Small ribosomal subunit protein uS7 from Rhizorhabdus wittichii (strain DSM 6014 / CCUG 31198 / JCM 15750 / NBRC 105917 / EY 4224 / RW1) (Sphingomonas wittichii).